The following is a 905-amino-acid chain: Heme/hemopexin-binding protein (905 aa).

The first 21 residues, 1–21 (MYKLNVISLIILTTYTGATYA), serve as a signal peptide directing secretion.

It localises to the secreted. Binds heme/hemopexin complexes. This Haemophilus influenzae (strain ATCC 51907 / DSM 11121 / KW20 / Rd) protein is Heme/hemopexin-binding protein (hxuA).